The chain runs to 1526 residues: Cell wall protein IFF4 (1526 aa).

An N-terminal signal peptide occupies residues 1–20; it reads MKFLQKFIITVALLTNIVFA. 2 N-linked (GlcNAc...) asparagine glycosylation sites follow: Asn93 and Asn498. Residues 512–541 are disordered; that stretch reads SSAGGSSFPEETHMLQTSDSDLSSTAGSES. The span at 525–541 shows a compositional bias: polar residues; it reads MLQTSDSDLSSTAGSES. Asn637 carries N-linked (GlcNAc...) asparagine glycosylation. A disordered region spans residues 1180 to 1207; it reads WNGAKSDSPHTSESDITSQYNSHSTSVA. The segment covering 1193–1207 has biased composition (polar residues); sequence SDITSQYNSHSTSVA. N-linked (GlcNAc...) asparagine glycosylation is found at Asn1451, Asn1463, Asn1479, Asn1502, and Asn1506. Residues 1455–1483 are disordered; sequence SSVSGYPTNRSDSNGYANTPTTGSNTSGD. Asn1502 carries the GPI-anchor amidated asparagine lipid modification. Residues 1503 to 1526 constitute a propeptide, removed in mature form; sequence GSTNISNKYLKFLGTVVSILILLI.

This sequence belongs to the HYR1/IFF family. The GPI-anchor is attached to the protein in the endoplasmic reticulum and serves to target the protein to the cell surface. There, the glucosamine-inositol phospholipid moiety is cleaved off and the GPI-$modified mannoprotein is covalently attached via its lipidless GPI glycan remnant to the 1,6-beta-glucan of the outer cell wall layer.

The protein resides in the secreted. The protein localises to the cell wall. It localises to the membrane. In terms of biological role, GPI-anchored cell wall protein involved in cell wall organization, hyphal growth, as well as in host-fungal interaction and virulence. Plays a role in adherence to plastic and to host epithelial cells. Promotes the tissue fungal burden during murine vaginal candidiasis. Also increases susceptibility to neutrophil-mediated killing. Furthermore, contributes to the severity of hematogenously disseminated candidiasis in normal mice, but not in neutropenic mice. The sequence is that of Cell wall protein IFF4 (IFF4) from Candida albicans (strain SC5314 / ATCC MYA-2876) (Yeast).